A 662-amino-acid chain; its full sequence is Translation factor GUF1, mitochondrial (662 aa).

A mitochondrion-targeting transit peptide spans 1–28; sequence MYIHSSRTVLARYGSRTPLLRPSVLGRY. In terms of domain architecture, tr-type G spans 62 to 244; that stretch reads ENYRNFSIVA…AIVDHIPAPD (183 aa). Residues 71–78, 137–141, and 191–194 contribute to the GTP site; these read AHVDHGKS, DTPGH, and NKID.

It belongs to the TRAFAC class translation factor GTPase superfamily. Classic translation factor GTPase family. LepA subfamily.

The protein localises to the mitochondrion inner membrane. It catalyses the reaction GTP + H2O = GDP + phosphate + H(+). Functionally, promotes mitochondrial protein synthesis. May act as a fidelity factor of the translation reaction, by catalyzing a one-codon backward translocation of tRNAs on improperly translocated ribosomes. Binds to mitochondrial ribosomes in a GTP-dependent manner. The chain is Translation factor GUF1, mitochondrial from Meyerozyma guilliermondii (strain ATCC 6260 / CBS 566 / DSM 6381 / JCM 1539 / NBRC 10279 / NRRL Y-324) (Yeast).